A 1673-amino-acid polypeptide reads, in one-letter code: MWDGQSEMCQAHVLFDSFVQAATCKETLRAFQDLCEELNLNPGGQPQFYHTLRSRLHYWKAKALWAKLDKRACQKEYMRGHACTSTTCLIIGAGPCGLRTAIELGFLGARVVLVEKRDAFSRNNVLHLWPFTIQDLRGLGAKKFYGKFCAGAIDHISIRQLQLMLLKVALLLGVEVHVNVEFKHLLEPPENQEKRVGWRAEVQPSSHPVRQLEFDVVIGADGRRNTLPGFRRKEFRGKLAIAITANFINRNTTAEAKVEEISGVAFIFNQRFFQDLRQATGIDLENIVYYKDDTHYFVMTAKKQSLLEKGVILRDYADTEMLLSRHNVDQNALLSYAREAADFSTNHQLPALDFAINHYGQSDVAMFDFTCMYASENAAMVRQRMGHPLLVALVGDSLLEPFWPMGTGIARGFLAAMDTAWMVRSWGQGNTPLEVLAERESVYRLLPQTTPENVSKNYSQFSVDPASRYPNINMQLINAAQVRHLIDTGEGPVLGLDAVSSPHPRLTRQESMARYSKLLSWCQEHTHGYRKVCVTDFTSSWRSGLALCALIHTFRPDLIDFASLEESEAEFSGQLGLDVAEQEFGICPIMTGKEMSVLEESDSLCMVMYLSQLHELLKDTSPPSGSQSSEERAVLFSSSRSPISLLSKLGQSLSRKRNPKDKKEKEADSVGKRRRTSQAGQSEEEDALHDGNENKSPAETPGSEPKASEGHSKVRSMASLLLAKFEENSPSPSTTAIRRQNYIHMYTGGVSSLALQIANQIQSQQAQAPKLLHRRESGSQKDLPVNVGSSDVCYFCGRRVYVMERLSAEGKFFHRSCFQCDHCSSTIRLSNYTYDQLHGKFYCKHHFSFRLASVAQRKRPAPPVAPRPAQASLAASSASTSLSSLGSVGTATPDSWSSSTHTDMASSLAKRLCGTPERIELENYKPSPQKQDSPLQEVPEETLAQHNLSASLQEKNAEEQSSSSESDLEEEELVWKKGEELHARTNGERKLDLEEELKEEEGGEKLEKQEGEEEGEVSEEEQDEGDSSDESYEGCSDDPDIDVSSLSESKLCDQREQEESVPFHQSPASTESPVSMKPSESDLTPDPSTTPESSPAKRSEVVEEFWMKSAEIRKSLGLTPLSRELQPKHIAASTQTSNVKESFYTSVTYNTAALDSPNQSARICDSSTQTHSVTDLQETSPLGPTDGDAGVDLGRCSVVHRLSITVEGCVMADNQGLDSTSFATESVLNPDAGLPTPPYSPSHSPLVGKQCRALHHSEPILDREVMAFSSTCTASVPQRSSFKSDLEQAQSLPPDEIEILCGDEAEKLPERSCRMESGEVDNRRAEHSRTLPDRVVAPLLAGGPEVRLRRSEMKLWGPDADGDVKEKKRSSLFSPRKSRKNGNAAAESGRETGKHKSLWKTVFSVYKKDKKRKEVAVVAETLPAANNGSKRKVSGINRTTDLCFRKNPSFSEDTDMSCHALLERCPLRAQRAGTEEELNARLTRRVQRAARRQAKQEELRRLHRAQIIQRQLEQVEVKQRQLEEKGVAVEKALRGEADFWEDSSTSVLLDVHLCGMGKKDDPSLMHQWFKLVQEKNALVRYESELMIFARELELEDRQSRLQQELRERMAVDDHLKGEEELAEERRILSEMLDVVEQRDALVALLEEQRVREKEEDSDLEAVMLSKGFSLHWD.

A monooxygenase domain region spans residues 2 to 492; that stretch reads WDGQSEMCQA…RHLIDTGEGP (491 aa). FAD-binding positions include cysteine 96, 96–124, glutamate 115, arginine 117, arginine 122, asparagine 124, and aspartate 396; that span reads CGLRTAIELGFLGARVVLVEKRDAFSRNN. The Calponin-homology (CH) domain maps to 512–618; sequence MARYSKLLSW…YLSQLHELLK (107 aa). A disordered region spans residues 647–714; it reads SKLGQSLSRK…PKASEGHSKV (68 aa). Residues 661–671 show a composition bias toward basic and acidic residues; it reads DKKEKEADSVG. The LIM zinc-binding domain maps to 791–853; the sequence is DVCYFCGRRV…KHHFSFRLAS (63 aa). The span at 882 to 892 shows a compositional bias: low complexity; the sequence is LSSLGSVGTAT. Disordered regions lie at residues 882–901, 918–938, 951–1100, 1159–1188, and 1357–1393; these read LSSLGSVGTATPDSWSSSTH, RIELENYKPSPQKQDSPLQEV, SLQE…KRSE, QSARICDSSTQTHSVTDLQETSPLGPTDGD, and GPDADGDVKEKKRSSLFSPRKSRKNGNAAAESGRETG. Basic and acidic residues predominate over residues 973 to 992; that stretch reads LVWKKGEELHARTNGERKLD. Composition is skewed to acidic residues over residues 993–1002 and 1010–1041; these read LEEELKEEEG and EGEEEGEVSEEEQDEGDSSDESYEGCSDDPDI. The segment covering 1081–1094 has biased composition (low complexity); it reads SDLTPDPSTTPESS. A compositionally biased stretch (polar residues) spans 1159–1182; that stretch reads QSARICDSSTQTHSVTDLQETSPL. 2 coiled-coil regions span residues 1475–1531 and 1573–1638; these read EEEL…AVEK and QEKN…VEQR. A bMERB domain is found at 1495–1661; it reads KQEELRRLHR…EKEEDSDLEA (167 aa).

It belongs to the Mical family. FAD is required as a cofactor.

It localises to the cytoplasm. The protein resides in the cytoskeleton. The protein localises to the nucleus. It catalyses the reaction L-methionyl-[F-actin] + NADPH + O2 + H(+) = L-methionyl-(R)-S-oxide-[F-actin] + NADP(+) + H2O. Functionally, monooxygenase that promotes depolymerization of F-actin by mediating oxidation of specific methionine residues on actin. Acts by modifying actin subunits through the addition of oxygen to form methionine-sulfoxide, leading to promote actin filament severing and prevent repolymerization. Involved in exocytic vesicles tethering and fusion: the monooxygenase activity is required for this process. The chain is Protein-methionine sulfoxide oxidase mical3b (mical3b) from Danio rerio (Zebrafish).